The chain runs to 276 residues: N-acyl homoserine lactonase AiiB (276 aa).

The Zn(2+) site is built by His-111, His-113, His-116, His-191, Asp-213, and His-259.

The protein belongs to the metallo-beta-lactamase superfamily. Zn(2+) serves as cofactor.

It catalyses the reaction an N-acyl-L-homoserine lactone + H2O = an N-acyl-L-homoserine + H(+). The protein is N-acyl homoserine lactonase AiiB of Agrobacterium fabrum (strain C58 / ATCC 33970) (Agrobacterium tumefaciens (strain C58)).